An 872-amino-acid chain; its full sequence is DNA mismatch repair protein MutS (872 aa).

Position 622–629 (622–629 (GPNMAGKS)) interacts with ATP.

Belongs to the DNA mismatch repair MutS family.

Functionally, this protein is involved in the repair of mismatches in DNA. It is possible that it carries out the mismatch recognition step. This protein has a weak ATPase activity. This Geotalea uraniireducens (strain Rf4) (Geobacter uraniireducens) protein is DNA mismatch repair protein MutS.